Reading from the N-terminus, the 105-residue chain is Nitrogen fixation nifHD region GlnB-like protein 1 (105 aa).

This sequence belongs to the P(II) protein family.

Functionally, could be involved in the regulation of nitrogen fixation. This chain is Nitrogen fixation nifHD region GlnB-like protein 1 (glnBA), found in Methanothermococcus thermolithotrophicus (Methanococcus thermolithotrophicus).